The chain runs to 451 residues: Bifunctional protein GlmU (451 aa).

The tract at residues 1–226 (MVAVAILAAG…YLEISGINDR (226 aa)) is pyrophosphorylase. Residues 7 to 10 (LAAG), K21, Q73, and 78 to 79 (GT) contribute to the UDP-N-acetyl-alpha-D-glucosamine site. D103 lines the Mg(2+) pocket. UDP-N-acetyl-alpha-D-glucosamine contacts are provided by G140, E155, N170, and N224. N224 is a binding site for Mg(2+). Residues 227 to 247 (KQLATAYDILQNRIKDYWMRA) form a linker region. The segment at 248-451 (GVTLIDPDSI…ISGWRMKTDD (204 aa)) is N-acetyltransferase. R329 and K347 together coordinate UDP-N-acetyl-alpha-D-glucosamine. H359 functions as the Proton acceptor in the catalytic mechanism. Y362 and N373 together coordinate UDP-N-acetyl-alpha-D-glucosamine. Residues A376, 382-383 (NY), A419, and R436 each bind acetyl-CoA.

In the N-terminal section; belongs to the N-acetylglucosamine-1-phosphate uridyltransferase family. The protein in the C-terminal section; belongs to the transferase hexapeptide repeat family. As to quaternary structure, homotrimer. The cofactor is Mg(2+).

The protein localises to the cytoplasm. The catalysed reaction is alpha-D-glucosamine 1-phosphate + acetyl-CoA = N-acetyl-alpha-D-glucosamine 1-phosphate + CoA + H(+). It carries out the reaction N-acetyl-alpha-D-glucosamine 1-phosphate + UTP + H(+) = UDP-N-acetyl-alpha-D-glucosamine + diphosphate. It participates in nucleotide-sugar biosynthesis; UDP-N-acetyl-alpha-D-glucosamine biosynthesis; N-acetyl-alpha-D-glucosamine 1-phosphate from alpha-D-glucosamine 6-phosphate (route II): step 2/2. Its pathway is nucleotide-sugar biosynthesis; UDP-N-acetyl-alpha-D-glucosamine biosynthesis; UDP-N-acetyl-alpha-D-glucosamine from N-acetyl-alpha-D-glucosamine 1-phosphate: step 1/1. The protein operates within bacterial outer membrane biogenesis; LPS lipid A biosynthesis. In terms of biological role, catalyzes the last two sequential reactions in the de novo biosynthetic pathway for UDP-N-acetylglucosamine (UDP-GlcNAc). The C-terminal domain catalyzes the transfer of acetyl group from acetyl coenzyme A to glucosamine-1-phosphate (GlcN-1-P) to produce N-acetylglucosamine-1-phosphate (GlcNAc-1-P), which is converted into UDP-GlcNAc by the transfer of uridine 5-monophosphate (from uridine 5-triphosphate), a reaction catalyzed by the N-terminal domain. The polypeptide is Bifunctional protein GlmU (Gloeothece citriformis (strain PCC 7424) (Cyanothece sp. (strain PCC 7424))).